The following is a 130-amino-acid chain: Small ribosomal subunit protein uS11 (130 aa).

Belongs to the universal ribosomal protein uS11 family. Part of the 30S ribosomal subunit. Interacts with proteins S7 and S18. Binds to IF-3.

Functionally, located on the platform of the 30S subunit, it bridges several disparate RNA helices of the 16S rRNA. Forms part of the Shine-Dalgarno cleft in the 70S ribosome. This Lactobacillus helveticus (strain DPC 4571) protein is Small ribosomal subunit protein uS11.